A 176-amino-acid polypeptide reads, in one-letter code: MSRVAKYPVKLPSGVEVKLEANKLTVKGGQGTLSMTVHSDVTIGQEEGQLTFNPSESAKSWAMVGTTRALVQNIVTGVSEGFTKSLEINGVGYRAQASGNTLNLTLGFSHPVEYKLPEGVTAETPKNTTIVLKSADKQQLGQVAAEIRAFRPPEPYKGKGIRYGDEEVRRKEAKKK.

Over residues 153-170 (PEPYKGKGIRYGDEEVRR) the composition is skewed to basic and acidic residues. A disordered region spans residues 153 to 176 (PEPYKGKGIRYGDEEVRRKEAKKK).

Belongs to the universal ribosomal protein uL6 family. Part of the 50S ribosomal subunit.

In terms of biological role, this protein binds to the 23S rRNA, and is important in its secondary structure. It is located near the subunit interface in the base of the L7/L12 stalk, and near the tRNA binding site of the peptidyltransferase center. This chain is Large ribosomal subunit protein uL6, found in Chromohalobacter salexigens (strain ATCC BAA-138 / DSM 3043 / CIP 106854 / NCIMB 13768 / 1H11).